The chain runs to 305 residues: Ribonuclease H (305 aa).

The enzyme catalyses Endonucleolytic cleavage to 5'-phosphomonoester.. Functionally, plays essential roles in DNA replication by removing the RNA primers from lagging strand fragments. Exhibits 5'to 3' exonuclease activity on either RNA/DNA or DNA/DNA duplexes and endonuclease activity on either flap or fork DNA structures. This is Ribonuclease H (rnh) from Enterobacteria phage T4 (Bacteriophage T4).